The following is a 329-amino-acid chain: Transaldolase (329 aa).

The active-site Schiff-base intermediate with substrate is Lys-136.

The protein belongs to the transaldolase family. Type 1 subfamily. As to quaternary structure, homodimer.

It localises to the cytoplasm. The enzyme catalyses D-sedoheptulose 7-phosphate + D-glyceraldehyde 3-phosphate = D-erythrose 4-phosphate + beta-D-fructose 6-phosphate. It functions in the pathway carbohydrate degradation; pentose phosphate pathway; D-glyceraldehyde 3-phosphate and beta-D-fructose 6-phosphate from D-ribose 5-phosphate and D-xylulose 5-phosphate (non-oxidative stage): step 2/3. In terms of biological role, transaldolase is important for the balance of metabolites in the pentose-phosphate pathway. The polypeptide is Transaldolase (Methylococcus capsulatus (strain ATCC 33009 / NCIMB 11132 / Bath)).